Here is a 143-residue protein sequence, read N- to C-terminus: Host transcription reprogramming factor 8 (143 aa).

The signal sequence occupies residues 1-19 (MHTYKFIQIALLFASVALA). The segment covering 24 to 34 (PSPPNPPPVPQ) has biased composition (pro residues). The disordered stretch occupies residues 24–43 (PSPPNPPPVPQLPNSETKSN). A C2H2-type 1 zinc finger spans residues 48-71 (HSCEFCGVVKPSGPAYLEHYHQNH). A disordered region spans residues 77–99 (GKLATPSPPNPPPVPTQKVETHA). Positions 82–91 (PSPPNPPPVP) are enriched in pro residues. The segment at 103–126 (HGCEWCNKVEPSGPAYIKHYKENH) adopts a C2H2-type 2 zinc-finger fold.

It is found in the secreted. It localises to the host nucleus. Probable secreted effector that translocates into the nuclei of host cells to reprogram the expression of targeted genes by binding on effector binding elements in rice. The sequence is that of Host transcription reprogramming factor 8 from Pyricularia oryzae (strain 70-15 / ATCC MYA-4617 / FGSC 8958) (Rice blast fungus).